Here is a 184-residue protein sequence, read N- to C-terminus: Structural protein V8 (184 aa).

The interval 14-35 (IYNKSNTLTNTPSNPTGNTNTL) is disordered.

Belongs to the sputnik virus V6 family.

The protein localises to the virion. The chain is Structural protein V8 from Sputnik virophage.